The primary structure comprises 51 residues: Sperm protamine P1 (51 aa).

This sequence belongs to the protamine P1 family. As to expression, testis.

It is found in the nucleus. Its subcellular location is the chromosome. Functionally, protamines substitute for histones in the chromatin of sperm during the haploid phase of spermatogenesis. They compact sperm DNA into a highly condensed, stable and inactive complex. The protein is Sperm protamine P1 (PRM1) of Piliocolobus badius (Western red colobus).